The chain runs to 356 residues: Tyrosine recombinase XerS (356 aa).

Positions 16–121 (IMPWYVLEYY…ALSSLYKYLT (106 aa)) constitute a Core-binding (CB) domain. Positions 169–354 (GFLTYIDQEY…VNDEQKNALD (186 aa)) constitute a Tyr recombinase domain. Active-site residues include Arg-210, Lys-234, His-306, Arg-309, and His-332. Tyr-341 serves as the catalytic O-(3'-phospho-DNA)-tyrosine intermediate.

The protein belongs to the 'phage' integrase family. XerS subfamily.

It localises to the cytoplasm. FtsK is required for recombination. Its function is as follows. Site-specific tyrosine recombinase, which acts by catalyzing the cutting and rejoining of the recombining DNA molecules. Essential to convert dimers of the bacterial chromosome into monomers to permit their segregation at cell division. The polypeptide is Tyrosine recombinase XerS (Streptococcus pneumoniae (strain Hungary19A-6)).